We begin with the raw amino-acid sequence, 274 residues long: ATP synthase subunit a (274 aa).

5 helical membrane passes run 44-64, 110-130, 142-164, 212-232, and 243-263; these read VDSMFFSLVLGSFFLSIFYMV, FIWVFLMNLMDLVPIDFFPFI, IVPSADINITLSMSLGVFFLILF, LFGNMYAGEMIFILIAGLLPW, and AIFHILIISLQAFIFMVLTIV.

Belongs to the ATPase A chain family. As to quaternary structure, F-type ATPases have 2 components, CF(1) - the catalytic core - and CF(0) - the membrane proton channel. CF(1) has five subunits: alpha(3), beta(3), gamma(1), delta(1), epsilon(1). CF(0) has three main subunits: a(1), b(2) and c(9-12). The alpha and beta chains form an alternating ring which encloses part of the gamma chain. CF(1) is attached to CF(0) by a central stalk formed by the gamma and epsilon chains, while a peripheral stalk is formed by the delta and b chains.

It is found in the cell membrane. Its function is as follows. Key component of the proton channel; it plays a direct role in the translocation of protons across the membrane. This chain is ATP synthase subunit a, found in Buchnera aphidicola subsp. Acyrthosiphon pisum (strain APS) (Acyrthosiphon pisum symbiotic bacterium).